We begin with the raw amino-acid sequence, 1444 residues long: Bromodomain-containing protein 4 (1444 aa).

Disordered stretches follow at residues 1 to 44 (MGDG…PKRQ), 154 to 217 (VEIS…PQPI), 279 to 362 (AAPP…KQQE), 492 to 523 (PVMA…ERAQ), 540 to 645 (AALS…GGAA), 722 to 986 (CLRK…SSQP), and 1020 to 1422 (TSLM…RREA). Low complexity predominate over residues 11 to 27 (SGSSSSQGQPSSQAPSS). Residues 43–149 (RQTNQLQYLL…KVFLTKISEM (107 aa)) form the Bromo 1 domain. The span at 186–196 (ASPQTRGLSNL) shows a compositional bias: polar residues. The span at 206–216 (PQGPPTLPPQP) shows a compositional bias: pro residues. Positions 303–319 (TTTPTANDQLNESSPAE) are enriched in polar residues. Positions 327 to 347 (PRRDNTRPSKLPKKEAPDSQH) are enriched in basic and acidic residues. In terms of domain architecture, Bromo 2 spans 358 to 467 (PKQQEQLRYC…DVFEMRFAKM (110 aa)). Low complexity predominate over residues 498-511 (SSSDTSSDSSSESE). Residues 498–517 (SSSDTSSDSSSESESSTDDS) form an NPS region region. The interval 538 to 610 (QLAALSQPQA…SKKLSKKEGG (73 aa)) is BID region. Over residues 549–569 (KPKKKEKEKKEKKKDKHKKKA) the composition is skewed to basic residues. Residues 633 to 730 (DTEEDLGLTG…SCLRKKKKPA (98 aa)) enclose the NET domain. Low complexity-rich tracts occupy residues 746–760 (GTSS…SSSS), 800–823 (LQPQ…HPSP), 919–954 (LQQS…QQQH), and 1036–1046 (PSLLQSVQVQS). Polar residues predominate over residues 1090–1109 (PLQTAQTQPGQHKVSMPSTK). The segment covering 1110–1121 (AQQIIQQQQATQ) has biased composition (low complexity). The tract at residues 1126-1444 (RQHKADSYNS…LMAIFEENLF (319 aa)) is C-terminal (CTD) region. Over residues 1151 to 1163 (QIPQYSLVHQSPS) the composition is skewed to polar residues. Basic and acidic residues predominate over residues 1246–1255 (QDKEKFKQEP). Over residues 1282-1296 (SSTTPSSGLKSSSDS) the composition is skewed to low complexity. Positions 1298–1357 (EQFRRAAREKEEREKALKAQVEQAEKDRLRKEQEKLRGRDEEDSIEPPRRPLEEPRRRQE) are enriched in basic and acidic residues. A compositionally biased stretch (low complexity) spans 1367–1389 (QHQTQAQAQTLNPAQSPSASQPT). Residues 1405–1422 (QQREMARRREQERRRREA) show a composition bias toward basic and acidic residues.

The protein belongs to the BET family. As to expression, widely expressed.

The protein localises to the nucleus. The protein resides in the chromosome. Its function is as follows. Chromatin reader protein that recognizes and binds acetylated histones and plays a key role in transmission of epigenetic memory across cell divisions and transcription regulation. Remains associated with acetylated chromatin throughout the entire cell cycle and provides epigenetic memory for postmitotic G1 gene transcription by preserving acetylated chromatin status and maintaining high-order chromatin structure. During interphase, plays a key role in regulating the transcription of signal-inducible genes by associating with the P-TEFb complex and recruiting it to promoters. This Danio rerio (Zebrafish) protein is Bromodomain-containing protein 4 (brd4).